Reading from the N-terminus, the 1188-residue chain is MAGHDVQYGKHRTRRSFSRIKEVLDLPNLIEIQTDSFQDFLDSGLKEVFEDVLPISNFTDTMELEFVGYEFKEPKYTLEEARIHDASYSAPIFVTFRLINKETGEIKTQEVFFGDFPIMTEMGTFIINGGERIIVSQLVRSPGVYFNDKVDKNGKVGYGSTVIPNRGAWLELETDSKDIAYTRIDRTRKIPFTTLVRALGFSGDDEIIDIFGDSELVRNTIEKDIHKNQSDSRTDEALKEIYERLRPGEPKTADSSRSLLTARFFDARRYDLAAVGRYKINKKLNIKTRLLNQIIAENLIDSETGEILVEAGTEMTRSVIESIEEQLDGDLNKFVYTPNDYAVVTEPVILQKFKVVSPVDPDRVVTIVGNANPDDKVRALTPADILAEMSYFLNLAEGLGKVDDIDHLGNRRIRAVGELLANQFRIGLARMERNVRERMSVQDNDVLTPQQIINIRPVTAAVKEFFGSSQLSQFMDQHNPLSELSHKRRLSALGPGGLTRDRAGYEVRDVHYTHYGRMCPIETPEGPNIGLINNLSSFGHLNKYGFIQTPYRKVDRVIGRVTNEIVWLTADEEDEFTVAQANSKLNPDGTFAEEIVMGRHQGNNQEFPASQVDFVDVSPKQVVAVATACIPFLENDDSNRALMGANMQRQAVPLIDPKAPYVGTGMEYQAAHDSGAAVIAQHNGKVVFSDAERVEVRREDGSLDVYHITKFRRSNSGTAYNQRTLVKIGDIVEKGDFIADGPSMEKGEMALGQNPIVAYMTWEGYNFEDAVIMSERLVKEDVYTSVHLEEFESETRDTKLGPEEITREVPNVGEEALKDLDEMGIIRIGAEVKEGDILVGKVTPKGEKDLSAEERLLHAIFGDKSREVRDTSLRVPHGGDGIVRDVKIFTRANGDELQSGVNMLVRVYIAQKRKIKVGDKMAGRHGNKGVVSRIVPVEDMPYLPDGTPVDIMLNPLGVPSRMNIGQVMELHLGMAARNLGIHIATPVFDGATSEDLWETVREAGMDSDAKTVLYDGRTGEPFDNRVSVGVMYMIKLHHMVDDKLHARSVGPYSLVTQQPLGGKAQFGGQRFGEMEVWALEAYGASNVLQEILTYKSDDVNGRLKAYEAITKGKPIPKPGVPESFRVLVKELQSLGLDMRVLDEDDNEVELRDLDEGEDDDVMHVDDLEKAREKQAQETQDIAESTEDN.

Belongs to the RNA polymerase beta chain family. The RNAP catalytic core consists of 2 alpha, 1 beta, 1 beta' and 1 omega subunit. When a sigma factor is associated with the core the holoenzyme is formed, which can initiate transcription.

It catalyses the reaction RNA(n) + a ribonucleoside 5'-triphosphate = RNA(n+1) + diphosphate. DNA-dependent RNA polymerase catalyzes the transcription of DNA into RNA using the four ribonucleoside triphosphates as substrates. This is DNA-directed RNA polymerase subunit beta from Streptococcus equi subsp. equi (strain 4047).